Reading from the N-terminus, the 262-residue chain is Acyl-[acyl-carrier-protein]--UDP-N-acetylglucosamine O-acyltransferase (262 aa).

Belongs to the transferase hexapeptide repeat family. LpxA subfamily. Homotrimer.

It localises to the cytoplasm. The catalysed reaction is a (3R)-hydroxyacyl-[ACP] + UDP-N-acetyl-alpha-D-glucosamine = a UDP-3-O-[(3R)-3-hydroxyacyl]-N-acetyl-alpha-D-glucosamine + holo-[ACP]. It participates in glycolipid biosynthesis; lipid IV(A) biosynthesis; lipid IV(A) from (3R)-3-hydroxytetradecanoyl-[acyl-carrier-protein] and UDP-N-acetyl-alpha-D-glucosamine: step 1/6. Its function is as follows. Involved in the biosynthesis of lipid A, a phosphorylated glycolipid that anchors the lipopolysaccharide to the outer membrane of the cell. The chain is Acyl-[acyl-carrier-protein]--UDP-N-acetylglucosamine O-acyltransferase from Paracidovorax citrulli (strain AAC00-1) (Acidovorax citrulli).